The sequence spans 2126 residues: Phthioceranic/hydroxyphthioceranic acid synthase (2126 aa).

Residues 24-447 (VTPVAVIGMA…GTNVHAVVEQ (424 aa)) form the Ketosynthase family 3 (KS3) domain. Residue Cys-196 is the Acyl-thioester intermediate; for beta-ketoacyl synthase activity of the active site. Catalysis depends on for beta-ketoacyl synthase activity residues His-331 and His-367. Residues 449–549 (PQTEAQPHAA…VYQPAVGQDD (101 aa)) are linker domain (LD). Positions 550–849 (RGPVWLFSGQ…VAALAGMRRE (300 aa)) are acyltransferase (AT). The active-site Acyl-ester intermediate; for acyltransferase activity is the Ser-641. The interval 909 to 1191 (STVAVHPLLG…LAVCGLRIGT (283 aa)) is dehydratase (DH). The N-terminal hotdog fold stretch occupies residues 914–1032 (HPLLGAHVRL…RRASAVLQQV (119 aa)). The 285-residue stretch at 914 to 1198 (HPLLGAHVRL…IGTGVSERDK (285 aa)) folds into the PKS/mFAS DH domain. Residue His-947 is the Proton acceptor; for dehydratase activity of the active site. The C-terminal hotdog fold stretch occupies residues 1051–1198 (PCRVDGEDLR…IGTGVSERDK (148 aa)). Catalysis depends on Asp-1115, which acts as the Proton donor; for dehydratase activity. Residues 1227–1398 (KWLLISDCAA…SEEDETAWRD (172 aa)) are pseudo beta-ketoacyl reductase (PsiKR). The interval 1426–1750 (SGMRLQIRTP…EHTGKLVLHI (325 aa)) is enoylreductase (ER). The tract at residues 1772 to 2019 (GSYIITGGLG…AERSRFFEVF (248 aa)) is beta-ketoacyl reductase (KR). NADP(+) is bound by residues 1780-1783 (LGGL), 1803-1806 (SRTQ), 1831-1832 (DI), and 1904-1905 (FS). The Carrier domain occupies 2040 to 2126 (DEWPARLRQL…DAPAAALSSQ (87 aa)). Ser-2075 is subject to O-(pantetheine 4'-phosphoryl)serine.

It depends on pantetheine 4'-phosphate as a cofactor.

It carries out the reaction hexadecanoyl-[(hydroxy)phthioceranic acid synthase] + 7 (S)-methylmalonyl-CoA + 14 NADPH + 21 H(+) = C37-phthioceranyl-[(hydroxy)phthioceranic acid synthase] + 7 CO2 + 14 NADP(+) + 7 CoA + 7 H2O. It catalyses the reaction hexadecanoyl-[(hydroxy)phthioceranic acid synthase] + 8 (S)-methylmalonyl-CoA + 16 NADPH + 24 H(+) = C40-phthioceranyl-[(hydroxy)phthioceranic acid synthase] + 8 CO2 + 16 NADP(+) + 8 CoA + 8 H2O. In Mycobacterium bovis (strain BCG / Pasteur 1173P2), this protein is Phthioceranic/hydroxyphthioceranic acid synthase (pks2).